Here is a 229-residue protein sequence, read N- to C-terminus: Putative 3-methyladenine DNA glycosylase (229 aa).

Belongs to the DNA glycosylase MPG family.

This is Putative 3-methyladenine DNA glycosylase from Enterococcus faecalis (strain ATCC 700802 / V583).